A 962-amino-acid polypeptide reads, in one-letter code: Protease 3 (962 aa).

Residues 1–23 (MPRSIWFKALLLFVALWAPLSQA) form the signal peptide. Residue His-88 coordinates Zn(2+). The active-site Proton acceptor is Glu-91. Residues His-92 and Glu-169 each contribute to the Zn(2+) site.

It belongs to the peptidase M16 family. As to quaternary structure, monomer. It depends on Zn(2+) as a cofactor.

It is found in the periplasm. It catalyses the reaction Preferential cleavage of 16-Tyr-|-Leu-17 and 25-Phe-|-Tyr-26 bonds of oxidized insulin B chain. Also acts on other substrates of Mw less than 7 kDa such as insulin and glucagon.. In terms of biological role, endopeptidase that degrades small peptides of less than 7 kDa, such as glucagon and insulin. The chain is Protease 3 (ptrA) from Escherichia coli O6:H1 (strain CFT073 / ATCC 700928 / UPEC).